The sequence spans 689 residues: DNA ligase (689 aa).

Residues 40–44 (DSEYD), 89–90 (SL), and Glu-121 each bind NAD(+). Residue Lys-123 is the N6-AMP-lysine intermediate of the active site. 4 residues coordinate NAD(+): Arg-144, Glu-179, Lys-295, and Lys-319. Residues Cys-413, Cys-416, Cys-431, and Cys-437 each coordinate Zn(2+). One can recognise a BRCT domain in the interval 610-689 (REQSGLTDKI…EEWLTLIKNV (80 aa)).

It belongs to the NAD-dependent DNA ligase family. LigA subfamily. The cofactor is Mg(2+). Mn(2+) serves as cofactor.

The catalysed reaction is NAD(+) + (deoxyribonucleotide)n-3'-hydroxyl + 5'-phospho-(deoxyribonucleotide)m = (deoxyribonucleotide)n+m + AMP + beta-nicotinamide D-nucleotide.. In terms of biological role, DNA ligase that catalyzes the formation of phosphodiester linkages between 5'-phosphoryl and 3'-hydroxyl groups in double-stranded DNA using NAD as a coenzyme and as the energy source for the reaction. It is essential for DNA replication and repair of damaged DNA. The polypeptide is DNA ligase (Rickettsia conorii (strain ATCC VR-613 / Malish 7)).